A 100-amino-acid chain; its full sequence is NADH-quinone oxidoreductase subunit K (100 aa).

Transmembrane regions (helical) follow at residues 4-24 (LQHG…GLLI), 28-48 (LLFM…AFVV), and 60-80 (VMYI…LALL).

Belongs to the complex I subunit 4L family. As to quaternary structure, NDH-1 is composed of 13 different subunits. Subunits NuoA, H, J, K, L, M, N constitute the membrane sector of the complex.

It is found in the cell inner membrane. It catalyses the reaction a quinone + NADH + 5 H(+)(in) = a quinol + NAD(+) + 4 H(+)(out). NDH-1 shuttles electrons from NADH, via FMN and iron-sulfur (Fe-S) centers, to quinones in the respiratory chain. The immediate electron acceptor for the enzyme in this species is believed to be ubiquinone. Couples the redox reaction to proton translocation (for every two electrons transferred, four hydrogen ions are translocated across the cytoplasmic membrane), and thus conserves the redox energy in a proton gradient. This chain is NADH-quinone oxidoreductase subunit K, found in Pectobacterium carotovorum subsp. carotovorum (strain PC1).